The following is a 196-amino-acid chain: Large ribosomal subunit protein eL15 (196 aa).

The interval 162 to 196 is disordered; sequence RGLTNAGRSNRGLQNRGKGAEHTRPSAGSGSRRGK.

The protein belongs to the eukaryotic ribosomal protein eL15 family.

This chain is Large ribosomal subunit protein eL15, found in Haloquadratum walsbyi (strain DSM 16790 / HBSQ001).